The following is a 122-amino-acid chain: Large ribosomal subunit protein uL14c (122 aa).

It belongs to the universal ribosomal protein uL14 family. As to quaternary structure, part of the 50S ribosomal subunit.

The protein resides in the plastid. Its subcellular location is the chloroplast. Its function is as follows. Binds to 23S rRNA. This Amborella trichopoda protein is Large ribosomal subunit protein uL14c.